The primary structure comprises 345 residues: Myb/SANT-like DNA-binding domain-containing protein 4 (345 aa).

Residues 4-77 (LKRKRKSNFS…EVKRRYLDWR (74 aa)) enclose the Myb-like domain. Residue Lys-9 forms a Glycyl lysine isopeptide (Lys-Gly) (interchain with G-Cter in SUMO2) linkage. Ser-106 carries the post-translational modification Phosphoserine. Glycyl lysine isopeptide (Lys-Gly) (interchain with G-Cter in SUMO2) cross-links involve residues Lys-114 and Lys-142. Residues 141 to 175 (VKVEEEERDPQSPEFEIEEEEEMLSSVIPDSRREN) are disordered. At Thr-188 the chain carries Phosphothreonine. A coiled-coil region spans residues 202 to 344 (HLLMNIEKQK…RLRIQKEGHL (143 aa)). Glycyl lysine isopeptide (Lys-Gly) (interchain with G-Cter in SUMO2) cross-links involve residues Lys-237, Lys-254, and Lys-273.

This chain is Myb/SANT-like DNA-binding domain-containing protein 4 (Msantd4), found in Rattus norvegicus (Rat).